Consider the following 144-residue polypeptide: Cytochrome c oxidase subunit 4 isoform 1, mitochondrial (144 aa).

The Mitochondrial matrix segment spans residues 1-73 (SVVKSEDFTL…SFAEMNRRSN (73 aa)). The residue at position 4 (lysine 4) is an N6-acetyllysine; alternate. An N6-succinyllysine; alternate modification is found at lysine 4. An N6-acetyllysine modification is found at lysine 28. Phosphoserine occurs at positions 31 and 33. Lysine 35 carries the post-translational modification N6-acetyllysine; alternate. Residue lysine 35 is modified to N6-succinyllysine; alternate. Lysine 42 is modified (N6-acetyllysine). Residues 74 to 99 (EWKTVVGTAMFFFGITALIVMWEKRY) traverse the membrane as a helical segment. The Mitochondrial intermembrane segment spans residues 100 to 144 (VYGPLPQTFDKEWVAMQTKRMLDMKVNPIQGLASKWDYEKNEWKK).

It belongs to the cytochrome c oxidase IV family. Component of the cytochrome c oxidase (complex IV, CIV), a multisubunit enzyme composed of 14 subunits. The complex is composed of a catalytic core of 3 subunits MT-CO1, MT-CO2 and MT-CO3, encoded in the mitochondrial DNA, and 11 supernumerary subunits COX4I, COX5A, COX5B, COX6A, COX6B, COX6C, COX7A, COX7B, COX7C, COX8 and NDUFA4, which are encoded in the nuclear genome. The complex exists as a monomer or a dimer and forms supercomplexes (SCs) in the inner mitochondrial membrane with NADH-ubiquinone oxidoreductase (complex I, CI) and ubiquinol-cytochrome c oxidoreductase (cytochrome b-c1 complex, complex III, CIII), resulting in different assemblies (supercomplex SCI(1)III(2)IV(1) and megacomplex MCI(2)III(2)IV(2)). Interacts with PHB2; the interaction decreases in absence of SPHK2. Interacts with AFG1L. Interacts with ABCB7; this interaction allows the regulation of cellular iron homeostasis and cellular reactive oxygen species (ROS) levels in cardiomyocytes. Interacts with FLVCR2; this interaction occurs in the absence of heme and is disrupted upon heme binding. Interacts with IRGC.

The protein localises to the mitochondrion inner membrane. Its pathway is energy metabolism; oxidative phosphorylation. Component of the cytochrome c oxidase, the last enzyme in the mitochondrial electron transport chain which drives oxidative phosphorylation. The respiratory chain contains 3 multisubunit complexes succinate dehydrogenase (complex II, CII), ubiquinol-cytochrome c oxidoreductase (cytochrome b-c1 complex, complex III, CIII) and cytochrome c oxidase (complex IV, CIV), that cooperate to transfer electrons derived from NADH and succinate to molecular oxygen, creating an electrochemical gradient over the inner membrane that drives transmembrane transport and the ATP synthase. Cytochrome c oxidase is the component of the respiratory chain that catalyzes the reduction of oxygen to water. Electrons originating from reduced cytochrome c in the intermembrane space (IMS) are transferred via the dinuclear copper A center (CU(A)) of subunit 2 and heme A of subunit 1 to the active site in subunit 1, a binuclear center (BNC) formed by heme A3 and copper B (CU(B)). The BNC reduces molecular oxygen to 2 water molecules using 4 electrons from cytochrome c in the IMS and 4 protons from the mitochondrial matrix. The polypeptide is Cytochrome c oxidase subunit 4 isoform 1, mitochondrial (COX4I1) (Theropithecus gelada (Gelada baboon)).